Reading from the N-terminus, the 418-residue chain is Serine hydroxymethyltransferase (418 aa).

(6S)-5,6,7,8-tetrahydrofolate is bound by residues Leu-121 and Gly-125–Leu-127. Lys-230 is subject to N6-(pyridoxal phosphate)lysine. Ser-355–Phe-357 contributes to the (6S)-5,6,7,8-tetrahydrofolate binding site.

This sequence belongs to the SHMT family. As to quaternary structure, homodimer. It depends on pyridoxal 5'-phosphate as a cofactor.

The protein localises to the cytoplasm. The catalysed reaction is (6R)-5,10-methylene-5,6,7,8-tetrahydrofolate + glycine + H2O = (6S)-5,6,7,8-tetrahydrofolate + L-serine. It functions in the pathway one-carbon metabolism; tetrahydrofolate interconversion. It participates in amino-acid biosynthesis; glycine biosynthesis; glycine from L-serine: step 1/1. Its function is as follows. Catalyzes the reversible interconversion of serine and glycine with tetrahydrofolate (THF) serving as the one-carbon carrier. This reaction serves as the major source of one-carbon groups required for the biosynthesis of purines, thymidylate, methionine, and other important biomolecules. Also exhibits THF-independent aldolase activity toward beta-hydroxyamino acids, producing glycine and aldehydes, via a retro-aldol mechanism. This chain is Serine hydroxymethyltransferase, found in Streptococcus pyogenes serotype M3 (strain ATCC BAA-595 / MGAS315).